The chain runs to 118 residues: Protein YoeF (118 aa).

The polypeptide is Protein YoeF (yoeF) (Escherichia coli (strain K12)).